An 88-amino-acid chain; its full sequence is Large ribosomal subunit protein bL27 (88 aa).

The disordered stretch occupies residues 1–21 (MAHKKGTGSTRNGRDSNAKRL).

This sequence belongs to the bacterial ribosomal protein bL27 family.

The sequence is that of Large ribosomal subunit protein bL27 from Parasynechococcus marenigrum (strain WH8102).